Here is a 91-residue protein sequence, read N- to C-terminus: Cell division protein ZapA (91 aa).

Residues 58 to 91 (LTAVNIASEYLKLKEEYNRLREQLKKEKDGERDD) adopt a coiled-coil conformation.

This sequence belongs to the ZapA family. Type 2 subfamily. Homodimer. Interacts with FtsZ.

Its subcellular location is the cytoplasm. Activator of cell division through the inhibition of FtsZ GTPase activity, therefore promoting FtsZ assembly into bundles of protofilaments necessary for the formation of the division Z ring. It is recruited early at mid-cell but it is not essential for cell division. In Geobacillus kaustophilus (strain HTA426), this protein is Cell division protein ZapA.